The chain runs to 367 residues: UDP-N-acetylglucosamine--N-acetylmuramyl-(pentapeptide) pyrophosphoryl-undecaprenol N-acetylglucosamine transferase (367 aa).

Residues 11–13 (TAG), N125, R163, S197, and Q289 contribute to the UDP-N-acetyl-alpha-D-glucosamine site.

This sequence belongs to the glycosyltransferase 28 family. MurG subfamily.

It localises to the cell membrane. It carries out the reaction di-trans,octa-cis-undecaprenyl diphospho-N-acetyl-alpha-D-muramoyl-L-alanyl-D-glutamyl-meso-2,6-diaminopimeloyl-D-alanyl-D-alanine + UDP-N-acetyl-alpha-D-glucosamine = di-trans,octa-cis-undecaprenyl diphospho-[N-acetyl-alpha-D-glucosaminyl-(1-&gt;4)]-N-acetyl-alpha-D-muramoyl-L-alanyl-D-glutamyl-meso-2,6-diaminopimeloyl-D-alanyl-D-alanine + UDP + H(+). The protein operates within cell wall biogenesis; peptidoglycan biosynthesis. Functionally, cell wall formation. Catalyzes the transfer of a GlcNAc subunit on undecaprenyl-pyrophosphoryl-MurNAc-pentapeptide (lipid intermediate I) to form undecaprenyl-pyrophosphoryl-MurNAc-(pentapeptide)GlcNAc (lipid intermediate II). This chain is UDP-N-acetylglucosamine--N-acetylmuramyl-(pentapeptide) pyrophosphoryl-undecaprenol N-acetylglucosamine transferase, found in Clavibacter sepedonicus (Clavibacter michiganensis subsp. sepedonicus).